Here is a 549-residue protein sequence, read N- to C-terminus: Glucose-6-phosphate isomerase (549 aa).

Glu-355 serves as the catalytic Proton donor. Residues His-387 and Lys-515 contribute to the active site.

It belongs to the GPI family.

It is found in the cytoplasm. It carries out the reaction alpha-D-glucose 6-phosphate = beta-D-fructose 6-phosphate. It participates in carbohydrate biosynthesis; gluconeogenesis. The protein operates within carbohydrate degradation; glycolysis; D-glyceraldehyde 3-phosphate and glycerone phosphate from D-glucose: step 2/4. Catalyzes the reversible isomerization of glucose-6-phosphate to fructose-6-phosphate. The sequence is that of Glucose-6-phosphate isomerase from Haemophilus influenzae (strain PittEE).